Reading from the N-terminus, the 285-residue chain is 2,4-didehydro-3-deoxy-L-rhamnonate hydrolase (285 aa).

Pyruvate is bound at residue Leu-73. Positions 119, 121, and 150 each coordinate Mg(2+). Pyruvate is bound by residues Lys-168 and Thr-238.

This sequence belongs to the FAH family. Homodimer. Mg(2+) serves as cofactor.

It carries out the reaction 2,4-didehydro-3-deoxy-L-rhamnonate + H2O = (S)-lactate + pyruvate + H(+). The protein operates within carbohydrate degradation; L-rhamnose degradation. In terms of biological role, hydrolase that catalyzes the hydrolysis of 2,4-didehydro-3-deoxy-L-rhamnonate to pyruvate and L-lactate. Can also hydrolyze L-2,4-diketo-3-deoxylyxonate and L-2,4-diketo-3-deoxymannonate. In vitro can also use acylpyruvates such as acetylpyruvate and trimethylacetopyruvate. Catalyzes the fifth (last) step in an alternative pathway for rhamnose utilization that does not involve phosphorylated intermediates. The chain is 2,4-didehydro-3-deoxy-L-rhamnonate hydrolase from Sphingomonas sp. (strain SKA58).